Here is a 350-residue protein sequence, read N- to C-terminus: tRNA-splicing endonuclease (350 aa).

Active-site residues include Tyr286, His297, and Lys328.

The protein belongs to the tRNA-intron endonuclease family. Archaeal long subfamily. In terms of assembly, homodimer.

The enzyme catalyses pretRNA = a 3'-half-tRNA molecule with a 5'-OH end + a 5'-half-tRNA molecule with a 2',3'-cyclic phosphate end + an intron with a 2',3'-cyclic phosphate and a 5'-hydroxyl terminus.. Its function is as follows. Endonuclease that removes tRNA introns. Cleaves pre-tRNA at the 5'- and 3'-splice sites to release the intron. The products are an intron and two tRNA half-molecules bearing 2',3' cyclic phosphate and 5'-OH termini. Recognizes a pseudosymmetric substrate in which 2 bulged loops of 3 bases are separated by a stem of 4 bp. This is tRNA-splicing endonuclease from Methanosarcina acetivorans (strain ATCC 35395 / DSM 2834 / JCM 12185 / C2A).